The following is a 55-amino-acid chain: Large ribosomal subunit protein bL33 (55 aa).

This sequence belongs to the bacterial ribosomal protein bL33 family.

The polypeptide is Large ribosomal subunit protein bL33 (rpmG) (Nitrobacter hamburgensis (strain DSM 10229 / NCIMB 13809 / X14)).